The chain runs to 282 residues: sn-glycerol-3-phosphate transport system permease protein UgpE (282 aa).

A run of 6 helical transmembrane segments spans residues 14–34, 86–106, 112–132, 146–168, 201–221, and 248–268; these read LMLVLGIIIVAFPIYYTFIAS, LAIAIGKIVISFLSAFAIVFF, MGFFWMIFITLMLPVEVRILP, YAGLTLPLMASATATFLFRQFFL, IAALFVILFIYGWTQYLWPLL, and WNYVMVTAILAIIPPVMVVVL. Residues 78-269 enclose the ABC transmembrane type-1 domain; sequence LFNSFVVALA…IPPVMVVVLM (192 aa).

Belongs to the binding-protein-dependent transport system permease family. The complex is composed of two ATP-binding proteins (UgpC), two transmembrane proteins (UgpA and UgpE) and a solute-binding protein (UgpB).

The protein localises to the cell inner membrane. Its function is as follows. Part of the ABC transporter complex UgpBAEC involved in sn-glycerol-3-phosphate (G3P) import. Probably responsible for the translocation of the substrate across the membrane. The polypeptide is sn-glycerol-3-phosphate transport system permease protein UgpE (ugpE) (Agrobacterium fabrum (strain C58 / ATCC 33970) (Agrobacterium tumefaciens (strain C58))).